The following is a 114-amino-acid chain: Hemerythrin subunit 2 (114 aa).

Positions 26, 55, 59, 74, 78, 102, and 107 each coordinate Fe cation.

Belongs to the hemerythrin family.

Hemerythrin is a respiratory protein in blood cells of certain marine worms. The oxygen-binding site in each chain contains two iron atoms. The sequence is that of Hemerythrin subunit 2 from Golfingia vulgaris (Marine worm).